The following is a 433-amino-acid chain: Chitinase-like protein EN03 (433 aa).

The first 16 residues, 1 to 16, serve as a signal peptide directing secretion; the sequence is MKLFIALVGLLALAKA. Residues 23 to 433 enclose the GH18 domain; that stretch reads SKVLCYYDSR…PILRAAKYRL (411 aa). A disulfide bridge connects residues Cys27 and Cys54. An N-linked (GlcNAc...) asparagine glycan is attached at Asn220. A disulfide bond links Cys337 and Cys418.

This sequence belongs to the glycosyl hydrolase 18 family. IDGF subfamily.

It localises to the secreted. In Bombyx mori (Silk moth), this protein is Chitinase-like protein EN03.